Consider the following 379-residue polypeptide: Flap endonuclease 1 (379 aa).

Positions 1 to 105 (MGIKGLTKLL…QELAKRYSKR (105 aa)) are N-domain. Asp34 is a Mg(2+) binding site. Arg71 is a DNA binding site. Mg(2+) contacts are provided by Asp87, Glu159, Glu161, Asp180, and Asp182. The tract at residues 123 to 254 (AIEKLSKRTV…QTALKLIRQH (132 aa)) is I-domain. Residue Glu159 coordinates DNA. Positions 232 and 234 each coordinate DNA. Position 234 (Asp234) interacts with Mg(2+). Positions 331–379 (AKNKSSQGRLESFFKPTATTSAPLKRKETSDKTSKAAANKKTKAGGKKK) are disordered. Residues 336–344 (SQGRLESFF) form an interaction with PCNA region. Residues 355–364 (KRKETSDKTS) show a composition bias toward basic and acidic residues. Over residues 368 to 379 (ANKKTKAGGKKK) the composition is skewed to basic residues.

The protein belongs to the XPG/RAD2 endonuclease family. FEN1 subfamily. As to quaternary structure, interacts with PCNA. Three molecules of FEN1 bind to one PCNA trimer with each molecule binding to one PCNA monomer. PCNA stimulates the nuclease activity without altering cleavage specificity. Mg(2+) serves as cofactor. In terms of processing, phosphorylated. Phosphorylation upon DNA damage induces relocalization to the nuclear plasma.

The protein localises to the nucleus. It is found in the nucleolus. It localises to the nucleoplasm. Its subcellular location is the mitochondrion. Functionally, structure-specific nuclease with 5'-flap endonuclease and 5'-3' exonuclease activities involved in DNA replication and repair. During DNA replication, cleaves the 5'-overhanging flap structure that is generated by displacement synthesis when DNA polymerase encounters the 5'-end of a downstream Okazaki fragment. It enters the flap from the 5'-end and then tracks to cleave the flap base, leaving a nick for ligation. Also involved in the long patch base excision repair (LP-BER) pathway, by cleaving within the apurinic/apyrimidinic (AP) site-terminated flap. Acts as a genome stabilization factor that prevents flaps from equilibrating into structures that lead to duplications and deletions. Also possesses 5'-3' exonuclease activity on nicked or gapped double-stranded DNA, and exhibits RNase H activity. Also involved in replication and repair of rDNA and in repairing mitochondrial DNA. This chain is Flap endonuclease 1, found in Zea mays (Maize).